The following is a 161-amino-acid chain: Nucleotide-binding protein Reut_A2760 (161 aa).

It belongs to the YajQ family.

Nucleotide-binding protein. The polypeptide is Nucleotide-binding protein Reut_A2760 (Cupriavidus pinatubonensis (strain JMP 134 / LMG 1197) (Cupriavidus necator (strain JMP 134))).